Here is a 445-residue protein sequence, read N- to C-terminus: Probable carboxypeptidase UREG_07869 (445 aa).

A signal peptide spans 1-17 (MKSLILTTLALLPLVSC). Zn(2+) is bound at residue aspartate 165. The active-site Proton acceptor is glutamate 197. Zn(2+) is bound at residue glutamate 198.

The protein belongs to the peptidase M20A family. It depends on Zn(2+) as a cofactor.

It is found in the secreted. The polypeptide is Probable carboxypeptidase UREG_07869 (Uncinocarpus reesii (strain UAMH 1704)).